A 370-amino-acid chain; its full sequence is 2-oxoisovalerate dehydrogenase subunit beta, mitochondrial (370 aa).

A mitochondrion-targeting transit peptide spans 1 to 25; that stretch reads MLRGNNIKKVNSLLVRSFHSTVGNR. Tyr-130 is a binding site for thiamine diphosphate. The K(+) site is built by Gly-156, Leu-158, Thr-159, and Glu-209.

In terms of assembly, heterotetramer of 2 alpha and 2 beta chains. The cofactor is thiamine diphosphate.

The protein localises to the mitochondrion matrix. The enzyme catalyses N(6)-[(R)-lipoyl]-L-lysyl-[protein] + 3-methyl-2-oxobutanoate + H(+) = N(6)-[(R)-S(8)-2-methylpropanoyldihydrolipoyl]-L-lysyl-[protein] + CO2. The branched-chain alpha-keto dehydrogenase complex catalyzes the overall conversion of alpha-keto acids to acyl-CoA and CO(2). It contains multiple copies of three enzymatic components: branched-chain alpha-keto acid decarboxylase (E1), lipoamide acyltransferase (E2) and lipoamide dehydrogenase (E3). The sequence is that of 2-oxoisovalerate dehydrogenase subunit beta, mitochondrial (bkdB) from Dictyostelium discoideum (Social amoeba).